Consider the following 378-residue polypeptide: Rhodopsin (378 aa).

Topologically, residues Met1 to Trp53 are extracellular. N-linked (GlcNAc...) asparagine glycosylation occurs at Asn24. The chain crosses the membrane as a helical span at residues His54–Ile78. The Cytoplasmic segment spans residues Phe79–Asn90. Residues Leu91–Cys115 form a helical membrane-spanning segment. Residues Tyr116 to Tyr130 lie on the Extracellular side of the membrane. A disulfide bridge links Cys127 with Cys204. Residues Gly131–Phe150 form a helical membrane-spanning segment. At Asp151–Gly169 the chain is on the cytoplasmic side. Residues Ala170 to Asn193 form a helical membrane-spanning segment. Topologically, residues Arg194–Ser217 are extracellular. A glycan (N-linked (GlcNAc...) asparagine) is linked at Asn200. The helical transmembrane segment at Tyr218–Val245 threads the bilayer. The Cytoplasmic portion of the chain corresponds to Ala246–Lys280. Residues Val281–Ile304 form a helical membrane-spanning segment. Residues Phe305–Asn311 lie on the Extracellular side of the membrane. A helical membrane pass occupies residues Pro312–Ser336. Position 323 is an N6-(retinylidene)lysine (Lys323). At His337–Ala378 the chain is on the cytoplasmic side. A disordered region spans residues Gly356–Ala378. The segment covering Thr362–Glu371 has biased composition (low complexity).

The protein belongs to the G-protein coupled receptor 1 family. Opsin subfamily. Post-translationally, phosphorylated on some or all of the serine and threonine residues present in the C-terminal region.

It localises to the membrane. Its function is as follows. Visual pigments are the light-absorbing molecules that mediate vision. They consist of an apoprotein, opsin, covalently linked to cis-retinal. The sequence is that of Rhodopsin from Cataglyphis bombycina (Saharan silver ant).